Consider the following 578-residue polypeptide: A-type ATP synthase subunit A (578 aa).

Position 228 to 235 (228 to 235 (GPFGSGKT)) interacts with ATP.

It belongs to the ATPase alpha/beta chains family. In terms of assembly, has multiple subunits with at least A(3), B(3), C, D, E, F, H, I and proteolipid K(x).

The protein localises to the cell membrane. The catalysed reaction is ATP + H2O + 4 H(+)(in) = ADP + phosphate + 5 H(+)(out). Its function is as follows. Produces ATP from ADP in the presence of a proton gradient across the membrane. The archaeal alpha chain is a catalytic subunit. In terms of biological role, component of the A-type ATP synthase that produces ATP from ADP in the presence of a proton gradient across the membrane. The A chain is the catalytic subunit. The protein is A-type ATP synthase subunit A of Methanosarcina barkeri.